The following is a 1299-amino-acid chain: Tubulin polyglutamylase TTLL5 (1299 aa).

The TTL domain maps to 62-407 (RYHLSYKIVR…VCQDPAQRAS (346 aa)). ATP is bound by residues lysine 180, 186–187 (RG), 208–211 (SRYI), and 221–223 (KFD). Arginine 186 is an a protein binding site. Position 247 (arginine 247) interacts with L-glutamate. ATP is bound at residue 268–269 (TN). L-glutamate contacts are provided by tyrosine 270, serine 271, and lysine 293. Mg(2+)-binding residues include aspartate 353, glutamate 366, and asparagine 368. The tract at residues 378–488 (PLDLKIKASM…RGGFIRIFPT (111 aa)) is c-MTBD region. Position 384 (lysine 384) interacts with L-glutamate. Disordered regions lie at residues 589–626 (EMNVKTETESEEEEEVALDNEEEEQEASQEESAGFLRE), 832–853 (GTHSKSSKNNNSYSDSGAKGDH), 918–941 (SSVTTSDLSPGPGHHSSLSQIPSA), 1088–1130 (RSSA…RSLQ), and 1217–1275 (SSAT…QLNG). Over residues 597-617 (ESEEEEEVALDNEEEEQEASQ) the composition is skewed to acidic residues. A compositionally biased stretch (low complexity) spans 838-847 (SKNNNSYSDS). Polar residues-rich tracts occupy residues 1104 to 1130 (SGPTWSTQSDPQAPENHSSPPGSRSLQ), 1217 to 1230 (SSATASGQKPTTLP), and 1258 to 1275 (ATSQRASKGSSAEGQLNG).

It belongs to the tubulin--tyrosine ligase family. In terms of assembly, interacts with the transcriptional coactivators NCOA1/SRC-1 and NCOA2/TIF2. Mg(2+) serves as cofactor.

It is found in the cell projection. The protein resides in the cilium. Its subcellular location is the cytoplasm. It localises to the cytoskeleton. The protein localises to the cilium basal body. It is found in the nucleus. The enzyme catalyses L-glutamyl-[protein] + L-glutamate + ATP = gamma-L-glutamyl-L-glutamyl-[protein] + ADP + phosphate + H(+). The catalysed reaction is (L-glutamyl)(n)-gamma-L-glutamyl-L-glutamyl-[protein] + L-glutamate + ATP = (L-glutamyl)(n+1)-gamma-L-glutamyl-L-glutamyl-[protein] + ADP + phosphate + H(+). Its function is as follows. Polyglutamylase which modifies tubulin, generating polyglutamate side chains on the gamma-carboxyl group of specific glutamate residues within the C-terminal tail of tubulin. Preferentially mediates ATP-dependent initiation step of the polyglutamylation reaction over the elongation step. Preferentially modifies the alpha-tubulin tail over a beta-tail. Required for CCSAP localization to both polyglutamylated spindle and cilia microtubules. Increases the effects of transcriptional coactivator NCOA2/TIF2 in glucocorticoid receptor-mediated repression and induction and in androgen receptor-mediated induction. The sequence is that of Tubulin polyglutamylase TTLL5 (TTLL5) from Pongo abelii (Sumatran orangutan).